A 189-amino-acid chain; its full sequence is GTP cyclohydrolase 1 (189 aa).

Positions 79, 82, and 150 each coordinate Zn(2+).

It belongs to the GTP cyclohydrolase I family. As to quaternary structure, toroid-shaped homodecamer, composed of two pentamers of five dimers.

It carries out the reaction GTP + H2O = 7,8-dihydroneopterin 3'-triphosphate + formate + H(+). The protein operates within cofactor biosynthesis; 7,8-dihydroneopterin triphosphate biosynthesis; 7,8-dihydroneopterin triphosphate from GTP: step 1/1. In Rickettsia massiliae (strain Mtu5), this protein is GTP cyclohydrolase 1.